The primary structure comprises 662 residues: Probable dolichyl-phosphate-mannose--protein mannosyltransferase 7 (662 aa).

The Lumenal segment spans residues Met-1–His-26. The helical transmembrane segment at Leu-27 to Trp-47 threads the bilayer. Residues Lys-48 to Glu-159 lie on the Cytoplasmic side of the membrane. A helical membrane pass occupies residues Trp-160–Thr-180. The Lumenal portion of the chain corresponds to Thr-181 to Gly-195. The helical transmembrane segment at Leu-196–Val-216 threads the bilayer. The Cytoplasmic portion of the chain corresponds to Arg-217–Lys-235. Residues Phe-236–Tyr-256 traverse the membrane as a helical segment. At Ser-257–Thr-482 the chain is on the lumenal side. Residues Pro-289–Pro-344 form the MIR 1 domain. Asn-347 carries N-linked (GlcNAc...) asparagine glycosylation. 2 consecutive MIR domains span residues Leu-359–Ile-418 and Asp-432–Val-488. A helical membrane pass occupies residues Phe-483–Ile-503. Residues Gly-504–Ser-565 lie on the Cytoplasmic side of the membrane. A helical transmembrane segment spans residues Pro-566–Val-586. Residues Gln-587–Glu-617 are Lumenal-facing. Residues Cys-618–Gly-638 traverse the membrane as a helical segment. Over Lys-639–Lys-662 the chain is Cytoplasmic.

It belongs to the glycosyltransferase 39 family.

The protein resides in the endoplasmic reticulum membrane. The catalysed reaction is a di-trans,poly-cis-dolichyl beta-D-mannosyl phosphate + L-seryl-[protein] = 3-O-(alpha-D-mannosyl)-L-seryl-[protein] + a di-trans,poly-cis-dolichyl phosphate + H(+). It catalyses the reaction a di-trans,poly-cis-dolichyl beta-D-mannosyl phosphate + L-threonyl-[protein] = 3-O-(alpha-D-mannosyl)-L-threonyl-[protein] + a di-trans,poly-cis-dolichyl phosphate + H(+). It functions in the pathway protein modification; protein glycosylation. Functionally, probable protein O-mannosyltransferase involved in O-glycosylation which is essential for cell wall rigidity. Transfers mannose from Dol-P-mannose to Ser or Thr residues on proteins. The protein is Probable dolichyl-phosphate-mannose--protein mannosyltransferase 7 of Saccharomyces cerevisiae (strain ATCC 204508 / S288c) (Baker's yeast).